The sequence spans 553 residues: Glucose-6-phosphate isomerase (553 aa).

D-glucose 6-phosphate contacts are provided by residues 164–165 (GS), 215–220 (SKTFTT), glutamine 359, glutamate 363, histidine 394, and lysine 516. Residue glutamate 363 is the Proton donor of the active site. Residues histidine 394 and lysine 516 contribute to the active site.

The protein belongs to the GPI family. Homodimer.

The protein localises to the cytoplasm. The protein resides in the cytosol. It catalyses the reaction alpha-D-glucose 6-phosphate = beta-D-fructose 6-phosphate. The protein operates within carbohydrate degradation; glycolysis; D-glyceraldehyde 3-phosphate and glycerone phosphate from D-glucose: step 2/4. In terms of biological role, in the cytoplasm, catalyzes the conversion of glucose-6-phosphate to fructose-6-phosphate, the second step in glycolysis, and the reverse reaction during gluconeogenesis. The chain is Glucose-6-phosphate isomerase (pgiA) from Aspergillus oryzae (strain ATCC 42149 / RIB 40) (Yellow koji mold).